The chain runs to 302 residues: HPr kinase/phosphorylase (302 aa).

Catalysis depends on residues His136 and Lys157. Gly151–Ser158 is an ATP binding site. Ser158 contacts Mg(2+). The active-site Proton acceptor; for phosphorylation activity. Proton donor; for dephosphorylation activity is Asp175. The important for the catalytic mechanism of both phosphorylation and dephosphorylation stretch occupies residues Leu198–Asp207. Glu199 is a binding site for Mg(2+). Arg240 is a catalytic residue. Residues Pro261–Arg266 are important for the catalytic mechanism of dephosphorylation.

This sequence belongs to the HPrK/P family. Homohexamer. Requires Mg(2+) as cofactor.

The enzyme catalyses [HPr protein]-L-serine + ATP = [HPr protein]-O-phospho-L-serine + ADP + H(+). It carries out the reaction [HPr protein]-O-phospho-L-serine + phosphate + H(+) = [HPr protein]-L-serine + diphosphate. Functionally, catalyzes the ATP- as well as the pyrophosphate-dependent phosphorylation of a specific serine residue in HPr, a phosphocarrier protein of the phosphoenolpyruvate-dependent sugar phosphotransferase system (PTS). HprK/P also catalyzes the pyrophosphate-producing, inorganic phosphate-dependent dephosphorylation (phosphorolysis) of seryl-phosphorylated HPr (P-Ser-HPr). The two antagonistic activities of HprK/P are regulated by several intracellular metabolites, which change their concentration in response to the absence or presence of rapidly metabolisable carbon sources (glucose, fructose, etc.) in the growth medium. Therefore, by controlling the phosphorylation state of HPr, HPrK/P is a sensor enzyme that plays a major role in the regulation of carbon metabolism and sugar transport: it mediates carbon catabolite repression (CCR), and regulates PTS-catalyzed carbohydrate uptake and inducer exclusion. The protein is HPr kinase/phosphorylase of Clostridium beijerinckii (strain ATCC 51743 / NCIMB 8052) (Clostridium acetobutylicum).